Reading from the N-terminus, the 518-residue chain is D-aminopeptidase (518 aa).

S62 serves as the catalytic Nucleophile. The active-site Proton donor/acceptor is K65. The interval 373–392 (FGTGPEKMDISGENEAQSSM) is disordered. An important for specificity region spans residues 477 to 487 (QRSMDAPSPGE). D481 contributes to the substrate binding site.

This sequence belongs to the peptidase S12 family. As to quaternary structure, homodimer.

It carries out the reaction Release of an N-terminal D-amino acid from a peptide, Xaa-|-Yaa-, in which Xaa is preferably D-Ala, D-Ser or D-Thr. D-amino acid amides and methyl esters also are hydrolyzed, as is glycine amide.. With respect to regulation, inhibited by beta-lactam compounds such as 6-aminopenicillic acid, 7-aminocephalosporanic acid, benzylpenicillin and ampicillin. Inhibited by p-chloromercuribenzoate. In terms of biological role, hydrolyzes N-terminal residues in D-amino acid-containing peptides. The polypeptide is D-aminopeptidase (Brucella melitensis biotype 1 (strain ATCC 23456 / CCUG 17765 / NCTC 10094 / 16M)).